The chain runs to 166 residues: MSIAYDLLLSILIYLPAFIANGSGPFIKRGTPIDFGKNFVDGRRLFGDGKTFEGLIVALTFGTTVGVIISKFFTAEWTLISFLESLFAMIGDMIGAFIKRRLGIPRGGRVLGLDQLDFVLGASLILVLMRVNITWYQFLFICGLAFFLHQGTNYVAYLLKIKNVPW.

5 helical membrane passes run 7-27 (LLLS…GPFI), 55-75 (LIVA…FFTA), 78-98 (TLIS…GAFI), 116-136 (LDFV…ITWY), and 138-158 (FLFI…VAYL).

Belongs to the CDP-archaeol synthase family. The cofactor is Mg(2+).

The protein localises to the cell membrane. The enzyme catalyses 2,3-bis-O-(geranylgeranyl)-sn-glycerol 1-phosphate + CTP + H(+) = CDP-2,3-bis-O-(geranylgeranyl)-sn-glycerol + diphosphate. The protein operates within membrane lipid metabolism; glycerophospholipid metabolism. Functionally, catalyzes the formation of CDP-2,3-bis-(O-geranylgeranyl)-sn-glycerol (CDP-archaeol) from 2,3-bis-(O-geranylgeranyl)-sn-glycerol 1-phosphate (DGGGP) and CTP. This reaction is the third ether-bond-formation step in the biosynthesis of archaeal membrane lipids. The sequence is that of CDP-archaeol synthase from Saccharolobus islandicus (strain Y.N.15.51 / Yellowstone #2) (Sulfolobus islandicus).